Consider the following 216-residue polypeptide: MLEIFDVSYNDLTERRSEDLYKLRKITFKDRLDWAVNCSNDMEFDEFDNSGTRYMLGIYDNQLVCSVRFIDLRLPNMITHTFQHLFGDVKLPEGDYIESSRFFVDKNRAKALLGSRYPISYVLFLSMINYARHHGHTGIYTIVSRAMLTIAKRSGWEIEVIKEGFVSENEPIYLLRLPIDCHNQHLLAKRIRDQSESNIAALCQWPMSLTVTPEQV.

This sequence belongs to the autoinducer synthase family.

The catalysed reaction is a fatty acyl-[ACP] + S-adenosyl-L-methionine = an N-acyl-L-homoserine lactone + S-methyl-5'-thioadenosine + holo-[ACP] + H(+). Its function is as follows. Required for the synthesis of OHHL (N-(3-oxohexanoyl)-L-homoserine lactone), an autoinducer molecule which binds to a yet uncharacterized transcriptional regulator. The sequence is that of Acyl-homoserine-lactone synthase (eagI) from Enterobacter agglomerans (Erwinia herbicola).